The following is a 359-amino-acid chain: MTSASKGILRPFLIVCIILGCFMACLLIYIKPTNSWIFSPMESASSVLKMKNFFSTKTDYFNETTILIWVWPFGQTFDLTSCQAMFNIQGCHLTTDRSLYNKSHAVLIHHRDISWDLTNLPQQARPPFQKWIWMNLESPTHTPQKSGIEHLFNLTLTYRRDSDIQVPYGFLTVSTNPFVFEVPSKEKLVCWVVSNWNPEHARVKYYNELSKSIEIHTYGQAFGEYVNDKNLIPTISTCKFYLSFENSIHKDYITEKLYNAFLAGSVPVVLGPSRENYENYIPADSFIHVEDYNSPSELAKYLKEVDKNNKLYLSYFNWRKDFTVNLPRFWESHACLACDHVKRHQEYKSVGNLEKWFWN.

The Cytoplasmic segment spans residues 1–11; that stretch reads MTSASKGILRP. A helical; Signal-anchor for type II membrane protein membrane pass occupies residues 12 to 32; that stretch reads FLIVCIILGCFMACLLIYIKP. Over 33–359 the chain is Lumenal; the sequence is TNSWIFSPME…VGNLEKWFWN (327 aa). Asparagine 62 carries an N-linked (GlcNAc...) asparagine glycan. The tract at residues 63–168 is acceptor-binding; the sequence is ETTILIWVWP…RRDSDIQVPY (106 aa). Position 75 (glutamine 75) interacts with a beta-D-galactosyl-(1-&gt;4)-N-acetyl-beta-D-glucosaminyl derivative. Cystine bridges form between cysteine 82–cysteine 335, cysteine 91–cysteine 338, and cysteine 190–cysteine 238. An N-linked (GlcNAc...) asparagine glycan is attached at asparagine 101. A beta-D-galactosyl-(1-&gt;4)-N-acetyl-beta-D-glucosaminyl derivative is bound at residue glutamate 137. Residue glutamate 137 is the Nucleophile of the active site. Glutamate 137 lines the GDP-beta-L-fucose pocket. The N-linked (GlcNAc...) asparagine glycan is linked to asparagine 153. Positions 168, 192, 194, 195, 202, 226, 241, 246, 252, 255, and 256 each coordinate GDP-beta-L-fucose. The tract at residues 169 to 326 is donor-binding; it reads GFLTVSTNPF…NWRKDFTVNL (158 aa). The tract at residues 327-359 is acceptor-binding; sequence PRFWESHACLACDHVKRHQEYKSVGNLEKWFWN.

This sequence belongs to the glycosyltransferase 10 family. As to quaternary structure, homodimer. Post-translationally, N-glycosylated with complex-type N-glycans.

Its subcellular location is the golgi apparatus. The protein localises to the trans-Golgi network membrane. It localises to the golgi apparatus membrane. The catalysed reaction is a beta-D-galactosyl-(1-&gt;4)-N-acetyl-beta-D-glucosaminyl derivative + GDP-beta-L-fucose = a beta-D-galactosyl-(1-&gt;4)-[alpha-L-fucosyl-(1-&gt;3)]-N-acetyl-beta-D-glucosaminyl derivative + GDP + H(+). It carries out the reaction an alpha-Neu5Ac-(2-&gt;3)-beta-D-Gal-(1-&gt;4)-beta-D-GlcNAc-(1-&gt;3)-beta-D-Gal-(1-&gt;4)-beta-D-GlcNAc derivative + GDP-beta-L-fucose = an alpha-Neu5Ac-(2-&gt;3)-beta-D-Gal-(1-&gt;4)-beta-D-GlcNAc-(1-&gt;3)-beta-D-Gal-(1-&gt;4)-[alpha-L-Fuc-(1-&gt;3)]-beta-D-GlcNAc derivative + GDP + H(+). The enzyme catalyses alpha-N-glycoloylneuraminosyl-(2-&gt;3)-beta-D-galactosyl-(1-&gt;4)-N-acetyl-beta-D-glucosaminyl-(1-&gt;3)-beta-D-galactosyl-(1-&gt;4)-N-acetyl-beta-D-glucosaminyl-(1-&gt;3)-beta-D-galactosyl-(1-&gt;4)-beta-D-glucosyl-(1&lt;-&gt;1')-ceramide + GDP-beta-L-fucose = alpha-N-glycoloylneuraminosyl-(2-&gt;3)-beta-D-galactosyl-(1-&gt;4)-N-acetyl-beta-D-glucosaminyl-(1-&gt;3)-beta-D-galactosyl-(1-&gt;4)-[alpha-L-fucosyl-(1-&gt;3)]-N-acetyl-beta-D-glucosaminyl-(1-&gt;3)-beta-D-galactosyl-(1-&gt;4)-beta-D-glucosyl-(1&lt;-&gt;1')-ceramide + GDP + H(+). It catalyses the reaction alpha-D-galactosyl-(1-&gt;3)-beta-D-galactosyl-(1-&gt;4)-N-acetyl-beta-D-glucosaminyl-(1-&gt;3)-beta-D-galactosyl-(1-&gt;4)-beta-D-glucosyl-(1&lt;-&gt;1')-ceramide + GDP-beta-L-fucose = a neolactoside IV(3)-alpha-Gal,III(3)-alpha-Fuc-nLc4Cer + GDP + H(+). The catalysed reaction is a neolactoside nLc4Cer + GDP-beta-L-fucose = a neolactoside III(3)-alpha-Fuc-nLc4Cer + GDP + H(+). It carries out the reaction an N-acetyl-alpha-neuraminyl-(2-&gt;3)-beta-D-galactosyl-(1-&gt;4)-N-acetyl-beta-D-glucosaminyl derivative + GDP-beta-L-fucose = an alpha-Neu5Ac-(2-&gt;3)-beta-D-Gal-(1-&gt;4)-[alpha-L-Fuc-(1-&gt;3)]-beta-D-GlcNAc derivative + GDP + H(+). The enzyme catalyses beta-D-Gal-(1-&gt;4)-beta-D-GlcNAc-(1-&gt;3)-beta-D-Gal-(1-&gt;4)-D-Glc + GDP-beta-L-fucose = beta-D-Gal-(1-&gt;4)-[alpha-L-Fuc-(1-&gt;3)]-beta-D-GlcNAc-(1-&gt;3)-beta-D-Gal-(1-&gt;4)-D-Glc + GDP + H(+). It catalyses the reaction an alpha-L-Fuc-(1-&gt;2)-beta-D-Gal-(1-&gt;4)-beta-D-GlcNAc derivative + GDP-beta-L-fucose = an alpha-L-Fuc-(1-&gt;2)-beta-D-Gal-(1-&gt;4)-[alpha-L-Fuc-(1-&gt;3)]-beta-D-GlcNAc derivative + GDP + H(+). The protein operates within protein modification; protein glycosylation. It participates in glycolipid biosynthesis. Its activity is regulated as follows. Activated by Mn2+. Functionally, catalyzes alpha(1-&gt;3) linkage of fucosyl moiety transferred from GDP-beta-L-fucose to N-acetyl glucosamine (GlcNAc) within type 2 lactosamine (LacNAc, beta-D-Gal-(1-&gt;4)-beta-D-GlcNAc-) glycan attached to glycolipids and N- or O-linked glycoproteins. Fucosylates distal type 2 LacNAc and its fucosylated (H-type 2 LacNAc) and sialylated (sialyl-type 2 LacNAc) derivatives to form Lewis x (Lex) (CD15) and Lewis y (Ley) antigenic epitopes involved in cell adhesion and differentiation. Generates Lex epitopes in the brain, presumably playing a role in the maintenance of neuronal stemness and neurite outgrowth in progenitor neural cells. Fucosylates the internal type 2 LacNAc unit of the polylactosamine chain to form VIM-2 antigen that serves as recognition epitope for SELE. Can also modify milk oligosaccharides in particular type 2 tetrasaccharide LNnT. In Canis lupus familiaris (Dog), this protein is 4-galactosyl-N-acetylglucosaminide 3-alpha-L-fucosyltransferase 9.